A 136-amino-acid polypeptide reads, in one-letter code: Cell division protein SepF 3 (136 aa).

It belongs to the SepF family. In terms of assembly, homodimer. Interacts with FtsZ.

The protein localises to the cytoplasm. Functionally, cell division protein that is part of the divisome complex and is recruited early to the Z-ring. Probably stimulates Z-ring formation, perhaps through the cross-linking of FtsZ protofilaments. Its function overlaps with FtsA. The sequence is that of Cell division protein SepF 3 from Streptomyces coelicolor (strain ATCC BAA-471 / A3(2) / M145).